Reading from the N-terminus, the 432-residue chain is UPF0597 protein APJL_1638 (432 aa).

The protein belongs to the UPF0597 family.

The polypeptide is UPF0597 protein APJL_1638 (Actinobacillus pleuropneumoniae serotype 3 (strain JL03)).